The following is a 1385-amino-acid chain: Contactin-associated protein 1 (1385 aa).

An N-terminal signal peptide occupies residues 1 to 20 (MMSLRLFSILLATVVSGAWG). The Extracellular segment spans residues 21–1284 (WGYYGCNEEL…PYYHDDGWIA (1264 aa)). The F5/8 type C domain occupies 26–169 (CNEELVGPLY…IGLRLGIYGC (144 aa)). Residues Cys-26 and Cys-169 are joined by a disulfide bond. N-linked (GlcNAc...) asparagine glycosylation is found at Asn-121, Asn-129, and Asn-277. Laminin G-like domains are found at residues 204-356 (FKTE…AFRC) and 390-539 (FRTW…FDTC). Residues Cys-324 and Cys-356 are joined by a disulfide bond. N-linked (GlcNAc...) asparagine glycans are attached at residues Asn-421, Asn-500, and Asn-519. 4 disulfides stabilise this stretch: Cys-507/Cys-539, Cys-545/Cys-556, Cys-550/Cys-565, and Cys-567/Cys-577. The region spanning 545-577 (CSPNMCEHDGRCYQSWDDFICYCELTGYKGVTC) is the EGF-like 1 domain. Residues 577-796 (CHEPLYKESC…NTISFHTGAA (220 aa)) form the Fibrinogen C-terminal domain. 9 N-linked (GlcNAc...) asparagine glycosylation sites follow: Asn-598, Asn-654, Asn-665, Asn-764, Asn-805, Asn-844, Asn-861, Asn-949, and Asn-957. Residues 814 to 958 (FRTSAPSGVF…NASEGTFPNC (145 aa)) enclose the Laminin G-like 3 domain. 4 disulfides stabilise this stretch: Cys-931/Cys-958, Cys-962/Cys-975, Cys-969/Cys-984, and Cys-986/Cys-996. Positions 962 to 996 (CTHPRFPCFHGGRCVERYSYYTCDCDLTAFDGPYC) constitute an EGF-like 2 domain. N-linked (GlcNAc...) asparagine glycans are attached at residues Asn-1079 and Asn-1148. Residues 1089 to 1251 (FSTNSAPAVL…VQGELSESNC (163 aa)) enclose the Laminin G-like 4 domain. Residues Cys-1210 and Cys-1251 are joined by a disulfide bond. Residues 1285–1305 (ILLGFLVAFLLLGLVGMLVLF) traverse the membrane as a helical segment. Over 1306-1385 (YLQNHRYKGS…PQILEESRSE (80 aa)) the chain is Cytoplasmic. Positions 1317-1385 (HTNEPKATHD…PQILEESRSE (69 aa)) are disordered. A compositionally biased stretch (basic and acidic residues) spans 1319 to 1329 (NEPKATHDSHP). A compositionally biased stretch (pro residues) spans 1334–1367 (PLPPSGPAQAPAPTPAPTQLPTPAPAPAPAPASG). The short motif at 1334 to 1370 (PLPPSGPAQAPAPTPAPTQLPTPAPAPAPAPASGPGP) is the SH3-binding element. A Phosphoserine modification is found at Ser-1384.

It belongs to the neurexin family. As to quaternary structure, interacts with CNTN1/contactin in cis form. In terms of tissue distribution, expressed in brain. In myelinated nerve fibers predominantly found in paranodal axoglial junctions. In the internodal region of myelinated axons in the CNS and the PNS also found as a thin line apposing the inner mesaxon of the myelin sheath. In PNS neurons this line forms a circumferential ring that apposes the innermost aspect of Schmidt-Lanterman incisures.

It is found in the membrane. Its subcellular location is the cell junction. The protein resides in the paranodal septate junction. Required, with CNTNAP2, for radial and longitudinal organization of myelinated axons. Plays a role in the formation of functional distinct domains critical for saltatory conduction of nerve impulses in myelinated nerve fibers. Demarcates the paranodal region of the axo-glial junction. In association with contactin involved in the signaling between axons and myelinating glial cells. This chain is Contactin-associated protein 1 (Cntnap1), found in Mus musculus (Mouse).